The sequence spans 782 residues: Coiled-coil alpha-helical rod protein 1 (782 aa).

Composition is skewed to basic and acidic residues over residues 62-74 (ERDV…EPGR) and 208-218 (ETRRAGEAKEL). 2 disordered regions span residues 62 to 82 (ERDV…WGLE) and 177 to 218 (EQLS…AKEL). Coiled coils occupy residues 82 to 314 (EGSQ…ELTR), 344 to 437 (LMVQ…NAVS), and 498 to 691 (VADV…QQEG).

The protein resides in the cytoplasm. It localises to the nucleus. May be a regulator of keratinocyte proliferation or differentiation. The polypeptide is Coiled-coil alpha-helical rod protein 1 (CCHCR1) (Pan troglodytes (Chimpanzee)).